The sequence spans 352 residues: Phenylalanine--tRNA ligase alpha subunit (352 aa).

Glu-258 provides a ligand contact to Mg(2+).

The protein belongs to the class-II aminoacyl-tRNA synthetase family. Phe-tRNA synthetase alpha subunit type 1 subfamily. As to quaternary structure, tetramer of two alpha and two beta subunits. Mg(2+) serves as cofactor.

Its subcellular location is the cytoplasm. The catalysed reaction is tRNA(Phe) + L-phenylalanine + ATP = L-phenylalanyl-tRNA(Phe) + AMP + diphosphate + H(+). This Staphylococcus aureus (strain Mu3 / ATCC 700698) protein is Phenylalanine--tRNA ligase alpha subunit.